The primary structure comprises 759 residues: Xaa-Pro dipeptidyl-peptidase (759 aa).

Active-site charge relay system residues include Ser347, Asp467, and His497.

It belongs to the peptidase S15 family. Homodimer.

The protein resides in the secreted. It carries out the reaction Hydrolyzes Xaa-Pro-|- bonds to release unblocked, N-terminal dipeptides from substrates including Ala-Pro-|-p-nitroanilide and (sequentially) Tyr-Pro-|-Phe-Pro-|-Gly-Pro-|-Ile.. Functionally, removes N-terminal dipeptides sequentially from polypeptides having unsubstituted N-termini provided that the penultimate residue is proline. The protein is Xaa-Pro dipeptidyl-peptidase (pepX) of Streptococcus gordonii.